A 233-amino-acid chain; its full sequence is tRNA (guanine-N(7)-)-methyltransferase (233 aa).

The tract at residues Met1–Pro22 is disordered. Positions 64, 89, 116, and 138 each coordinate S-adenosyl-L-methionine. The active site involves Asp138. Substrate-binding positions include Lys142, Asp174, and Thr212–Glu215.

It belongs to the class I-like SAM-binding methyltransferase superfamily. TrmB family.

It catalyses the reaction guanosine(46) in tRNA + S-adenosyl-L-methionine = N(7)-methylguanosine(46) in tRNA + S-adenosyl-L-homocysteine. The protein operates within tRNA modification; N(7)-methylguanine-tRNA biosynthesis. Its function is as follows. Catalyzes the formation of N(7)-methylguanine at position 46 (m7G46) in tRNA. The chain is tRNA (guanine-N(7)-)-methyltransferase from Brucella melitensis biotype 1 (strain ATCC 23456 / CCUG 17765 / NCTC 10094 / 16M).